A 749-amino-acid polypeptide reads, in one-letter code: 5-methyltetrahydropteroyltriglutamate--homocysteine methyltransferase (749 aa).

Residues 15–18 (RELK) and Lys-114 each bind 5-methyltetrahydropteroyltri-L-glutamate. Residues 425 to 427 (IGS) and Glu-478 each bind L-homocysteine. Residues 425 to 427 (IGS) and Glu-478 contribute to the L-methionine site. Residue Trp-555 participates in 5-methyltetrahydropteroyltri-L-glutamate binding. Residue Asp-593 coordinates L-homocysteine. Asp-593 lines the L-methionine pocket. Glu-599 is a 5-methyltetrahydropteroyltri-L-glutamate binding site. His-636, Cys-638, and Glu-660 together coordinate Zn(2+). Catalysis depends on His-689, which acts as the Proton donor. Position 721 (Cys-721) interacts with Zn(2+).

Belongs to the vitamin-B12 independent methionine synthase family. Zn(2+) serves as cofactor.

The catalysed reaction is 5-methyltetrahydropteroyltri-L-glutamate + L-homocysteine = tetrahydropteroyltri-L-glutamate + L-methionine. The protein operates within amino-acid biosynthesis; L-methionine biosynthesis via de novo pathway; L-methionine from L-homocysteine (MetE route): step 1/1. In terms of biological role, catalyzes the transfer of a methyl group from 5-methyltetrahydrofolate to homocysteine resulting in methionine formation. The protein is 5-methyltetrahydropteroyltriglutamate--homocysteine methyltransferase of Streptococcus pneumoniae serotype 2 (strain D39 / NCTC 7466).